The primary structure comprises 959 residues: UPF0182 protein MAE_41360 (959 aa).

The next 9 helical transmembrane spans lie at 13–33 (PILL…VVAN), 50–70 (LSWQ…FIFT), 99–119 (LLGL…MLLY), 156–176 (DISS…GLLI), 184–204 (IISI…WANF), 239–259 (LWLT…YLFS), 276–296 (LRHL…HHII), 319–339 (VGQF…IWLG), and 362–382 (FFPY…GTII).

It belongs to the UPF0182 family.

Its subcellular location is the cell membrane. This is UPF0182 protein MAE_41360 from Microcystis aeruginosa (strain NIES-843 / IAM M-2473).